Reading from the N-terminus, the 455-residue chain is Bifunctional protein GlmU (455 aa).

A pyrophosphorylase region spans residues 1 to 228 (MNNTLTTIIL…EFEIEGVNNR (228 aa)). UDP-N-acetyl-alpha-D-glucosamine contacts are provided by residues 10–13 (LAAG), Lys-24, Gln-75, 80–81 (GT), 102–104 (YGD), Gly-138, Glu-153, Asn-168, and Asn-226. Asp-104 lines the Mg(2+) pocket. Position 226 (Asn-226) interacts with Mg(2+). Residues 229–249 (QQLAQLERKWQAKLVEDLQVQ) form a linker region. An N-acetyltransferase region spans residues 250–455 (GVQFADPNRV…DNYQRPEKKK (206 aa)). UDP-N-acetyl-alpha-D-glucosamine-binding residues include Arg-332 and Lys-350. Residue His-362 is the Proton acceptor of the active site. Positions 365 and 376 each coordinate UDP-N-acetyl-alpha-D-glucosamine. Acetyl-CoA contacts are provided by residues Ala-379, 385–386 (NY), Ala-422, and Arg-439.

The protein in the N-terminal section; belongs to the N-acetylglucosamine-1-phosphate uridyltransferase family. In the C-terminal section; belongs to the transferase hexapeptide repeat family. In terms of assembly, homotrimer. Requires Mg(2+) as cofactor.

The protein localises to the cytoplasm. The catalysed reaction is alpha-D-glucosamine 1-phosphate + acetyl-CoA = N-acetyl-alpha-D-glucosamine 1-phosphate + CoA + H(+). The enzyme catalyses N-acetyl-alpha-D-glucosamine 1-phosphate + UTP + H(+) = UDP-N-acetyl-alpha-D-glucosamine + diphosphate. Its pathway is nucleotide-sugar biosynthesis; UDP-N-acetyl-alpha-D-glucosamine biosynthesis; N-acetyl-alpha-D-glucosamine 1-phosphate from alpha-D-glucosamine 6-phosphate (route II): step 2/2. It participates in nucleotide-sugar biosynthesis; UDP-N-acetyl-alpha-D-glucosamine biosynthesis; UDP-N-acetyl-alpha-D-glucosamine from N-acetyl-alpha-D-glucosamine 1-phosphate: step 1/1. It functions in the pathway bacterial outer membrane biogenesis; LPS lipid A biosynthesis. Its function is as follows. Catalyzes the last two sequential reactions in the de novo biosynthetic pathway for UDP-N-acetylglucosamine (UDP-GlcNAc). The C-terminal domain catalyzes the transfer of acetyl group from acetyl coenzyme A to glucosamine-1-phosphate (GlcN-1-P) to produce N-acetylglucosamine-1-phosphate (GlcNAc-1-P), which is converted into UDP-GlcNAc by the transfer of uridine 5-monophosphate (from uridine 5-triphosphate), a reaction catalyzed by the N-terminal domain. In Psychrobacter sp. (strain PRwf-1), this protein is Bifunctional protein GlmU.